The following is a 359-amino-acid chain: Adenosine deaminase (359 aa).

Residues His-15 and His-17 each contribute to the Zn(2+) site. Residues His-17, Asp-19, and Gly-184 each contribute to the substrate site. A Zn(2+)-binding site is contributed by His-213. Residue Glu-216 is the Proton donor of the active site. Asp-295 contributes to the Zn(2+) binding site. Asp-296 contacts substrate.

The protein belongs to the metallo-dependent hydrolases superfamily. Adenosine and AMP deaminases family. Requires Zn(2+) as cofactor.

It is found in the cell membrane. The protein resides in the cell junction. The protein localises to the cytoplasmic vesicle lumen. Its subcellular location is the cytoplasm. It localises to the lysosome. The catalysed reaction is adenosine + H2O + H(+) = inosine + NH4(+). It catalyses the reaction 2'-deoxyadenosine + H2O + H(+) = 2'-deoxyinosine + NH4(+). Functionally, catalyzes the hydrolytic deamination of adenosine and 2-deoxyadenosine. Plays an important role in purine metabolism and in adenosine homeostasis. Modulates signaling by extracellular adenosine, and so contributes indirectly to cellular signaling events. May act as a positive regulator of T-cell coactivation. This is Adenosine deaminase (ada) from Danio rerio (Zebrafish).